Reading from the N-terminus, the 339-residue chain is Tetraacyldisaccharide 4'-kinase (339 aa).

44–51 (TVGGTGKT) lines the ATP pocket.

Belongs to the LpxK family.

The catalysed reaction is a lipid A disaccharide + ATP = a lipid IVA + ADP + H(+). It participates in glycolipid biosynthesis; lipid IV(A) biosynthesis; lipid IV(A) from (3R)-3-hydroxytetradecanoyl-[acyl-carrier-protein] and UDP-N-acetyl-alpha-D-glucosamine: step 6/6. In terms of biological role, transfers the gamma-phosphate of ATP to the 4'-position of a tetraacyldisaccharide 1-phosphate intermediate (termed DS-1-P) to form tetraacyldisaccharide 1,4'-bis-phosphate (lipid IVA). This is Tetraacyldisaccharide 4'-kinase from Bdellovibrio bacteriovorus (strain ATCC 15356 / DSM 50701 / NCIMB 9529 / HD100).